A 539-amino-acid chain; its full sequence is T-complex protein 1 subunit delta (539 aa).

The tract at residues 1 to 29 is disordered; the sequence is MPENVAPRSGATAGAAGGRGKGAYQDRDK. An Omega-N-methylarginine modification is found at R19. At K21 the chain carries N6-acetyllysine. At S36 the chain carries Phosphoserine. G53 lines the ADP pocket. G53 serves as a coordination point for ATP. Residue D104 coordinates Mg(2+). ADP is bound by residues G105, T106, T107, S108, N172, S173, and K174. ATP-binding residues include G105 and T106. K174 serves as a coordination point for ATP. 2 positions are modified to phosphoserine: S184 and S202. An N6-acetyllysine mark is found at K288, K302, K319, and K326. Position 425 (G425) interacts with ADP. S444 bears the Phosphoserine mark. Q510 serves as a coordination point for ADP.

The protein belongs to the TCP-1 chaperonin family. In terms of assembly, component of the chaperonin-containing T-complex (TRiC), a hexadecamer composed of two identical back-to-back stacked rings enclosing a protein folding chamber. Each ring is made up of eight different subunits: TCP1/CCT1, CCT2, CCT3, CCT4, CCT5, CCT6A/CCT6, CCT7, CCT8. Interacts with PACRG. Interacts with DNAAF4. Interacts with DLEC1.

It localises to the cytoplasm. It is found in the melanosome. Its subcellular location is the cytoskeleton. The protein localises to the microtubule organizing center. The protein resides in the centrosome. It localises to the cilium basal body. The catalysed reaction is ATP + H2O = ADP + phosphate + H(+). Functionally, component of the chaperonin-containing T-complex (TRiC), a molecular chaperone complex that assists the folding of actin, tubulin and other proteins upon ATP hydrolysis. The TRiC complex mediates the folding of WRAP53/TCAB1, thereby regulating telomere maintenance. As part of the TRiC complex may play a role in the assembly of BBSome, a complex involved in ciliogenesis regulating transports vesicles to the cilia. This is T-complex protein 1 subunit delta (CCT4) from Homo sapiens (Human).